The chain runs to 517 residues: Facilitated trehalose transporter Tret1 (517 aa).

The Cytoplasmic segment spans residues 1–56 (MWIEIPECYEVLRNVFSKFRRHSLTAAMVKLLMRADTHVSFTVPAEEPVAKCTFSQ). The chain crosses the membrane as a helical span at residues 57-77 (VLAALSVSLGSMVVGFSSAYT). Over 78–100 (SPALVSMKDRNITSFEVTDQSGS) the chain is Extracellular. Asn88 carries an N-linked (GlcNAc...) asparagine glycan. The helical transmembrane segment at 101–121 (WVGGIMPLAGLVGGILGGPLI) threads the bilayer. Topologically, residues 122–135 (EYLGRKNTILATAT) are cytoplasmic. A helical membrane pass occupies residues 136–156 (PFIISWLLIACATHVAMVLVG). Topologically, residues 157 to 158 (RA) are extracellular. Residues 159–179 (LSGFSVGVASLSLPVYLGETV) traverse the membrane as a helical segment. Topologically, residues 180 to 184 (QPEVR) are cytoplasmic. The helical transmembrane segment at 185 to 205 (GTLGLLPTAFGNIGILLCFVA) threads the bilayer. The Extracellular portion of the chain corresponds to 206–212 (GNYMDWS). A helical transmembrane segment spans residues 213-233 (ELAFLGATLPVPFLILMFLIP). Topologically, residues 234–296 (ETPRWYVSRG…DLLKKTNLKP (63 aa)) are cytoplasmic. The helical transmembrane segment at 297–317 (LLISLGLMFFQQLSGINAVIF) threads the bilayer. Residues 318–333 (YTVQIFQDAGSTIDEN) lie on the Extracellular side of the membrane. A helical transmembrane segment spans residues 334–354 (LCTIIVGVVNFIATFIATLLI). Over 355–360 (DRLGRK) the chain is Cytoplasmic. The helical transmembrane segment at 361–381 (MLLYISDIAMIITLMTLGGFF) threads the bilayer. At 382 to 392 (YVKNNGGDVSH) the chain is on the extracellular side. A helical membrane pass occupies residues 393-413 (IGWLPLASFVIFVLGFSLGFG). Residues 414–437 (PIPWLMMGEILPGKIRGSAASVAT) are Cytoplasmic-facing. Residues 438 to 458 (AFNWSCTFVVTKTFADIIASI) form a helical membrane-spanning segment. The Extracellular portion of the chain corresponds to 459-461 (GTH). The helical transmembrane segment at 462-482 (GAFWMFGSVCVVGLVFVIMYV) threads the bilayer. Residues 483 to 517 (PETQGKSLEDIERKMCGRVRRMSSVANIKPLSFNM) lie on the Cytoplasmic side of the membrane.

It belongs to the major facilitator superfamily. Sugar transporter (TC 2.A.1.1) family. Trehalose transporter subfamily.

The protein localises to the cell membrane. Functionally, high-capacity facilitative transporter for trehalose. Does not transport maltose, sucrose or lactose. Mediates the bidirectional transfer of trehalose. Responsible for the transport of trehalose synthesized in the fat body and the incorporation of trehalose into other tissues that require a carbon source, thereby regulating trehalose levels in the hemolymph. In Culex quinquefasciatus (Southern house mosquito), this protein is Facilitated trehalose transporter Tret1.